The sequence spans 160 residues: Large ribosomal subunit protein eL21 (160 aa).

It belongs to the eukaryotic ribosomal protein eL21 family.

The protein is Large ribosomal subunit protein eL21 (rpl21) of Dictyostelium discoideum (Social amoeba).